Consider the following 125-residue polypeptide: Ino eighty subunit 5 (125 aa).

Threonine 124 carries the post-translational modification Phosphothreonine.

Component of the chromatin-remodeling INO80 complex, at least composed of ARP4, ARP5, ARP8, RVB1, RVB2, TAF14, NHP10, IES1, IES3, IES4, IES6, ACT1, IES2, IES5 and INO80.

It is found in the nucleus. This is Ino eighty subunit 5 (IES5) from Saccharomyces cerevisiae (strain ATCC 204508 / S288c) (Baker's yeast).